The following is a 529-amino-acid chain: Bifunctional purine biosynthesis protein PurH (529 aa).

The region spanning 1–148 (MQQRRPVRRA…KNHKDVAIVV (148 aa)) is the MGS-like domain.

It belongs to the PurH family.

It catalyses the reaction (6R)-10-formyltetrahydrofolate + 5-amino-1-(5-phospho-beta-D-ribosyl)imidazole-4-carboxamide = 5-formamido-1-(5-phospho-D-ribosyl)imidazole-4-carboxamide + (6S)-5,6,7,8-tetrahydrofolate. The enzyme catalyses IMP + H2O = 5-formamido-1-(5-phospho-D-ribosyl)imidazole-4-carboxamide. It functions in the pathway purine metabolism; IMP biosynthesis via de novo pathway; 5-formamido-1-(5-phospho-D-ribosyl)imidazole-4-carboxamide from 5-amino-1-(5-phospho-D-ribosyl)imidazole-4-carboxamide (10-formyl THF route): step 1/1. It participates in purine metabolism; IMP biosynthesis via de novo pathway; IMP from 5-formamido-1-(5-phospho-D-ribosyl)imidazole-4-carboxamide: step 1/1. The protein is Bifunctional purine biosynthesis protein PurH of Salmonella heidelberg (strain SL476).